A 716-amino-acid polypeptide reads, in one-letter code: 1,4-alpha-glucan branching enzyme GlgB (716 aa).

Asp399 functions as the Nucleophile in the catalytic mechanism. Glu452 acts as the Proton donor in catalysis.

The protein belongs to the glycosyl hydrolase 13 family. GlgB subfamily. In terms of assembly, monomer.

The catalysed reaction is Transfers a segment of a (1-&gt;4)-alpha-D-glucan chain to a primary hydroxy group in a similar glucan chain.. It participates in glycan biosynthesis; glycogen biosynthesis. Its function is as follows. Catalyzes the formation of the alpha-1,6-glucosidic linkages in glycogen by scission of a 1,4-alpha-linked oligosaccharide from growing alpha-1,4-glucan chains and the subsequent attachment of the oligosaccharide to the alpha-1,6 position. This is 1,4-alpha-glucan branching enzyme GlgB from Rhodopseudomonas palustris (strain ATCC BAA-98 / CGA009).